The chain runs to 182 residues: Fatty-acid and retinol-binding protein 2 (182 aa).

A signal peptide spans 1-17 (MIRAFLVVALASVAVFS). Coiled coils occupy residues 46-73 (LKAI…EEEF) and 131-152 (TLDS…LSDD).

The protein belongs to the fatty-acid and retinol-binding protein (FARBP) family.

The protein resides in the secreted. Its function is as follows. Probably binds lipids. This Caenorhabditis elegans protein is Fatty-acid and retinol-binding protein 2 (far-2).